Reading from the N-terminus, the 434-residue chain is MASQTPGTEAQSQTVQPGRIAAISLHTSPLDQPGTGDAGGMNVYIVEVAKRLAERGIAVDIFTRATSFEQPPEVELAPGVTVRNIAAGPYGTLDKTALINYLCPFVHGMLRAEAEHLGGSYDLVHTHYWLSGQAGWPVAREWGVPLVHSMHTMARVKNMSLAEGDTPEPEERVRGEDALVALADRLIANTDDEAAQLINYYGASPSRVSTVFPGVDLTTFTPGSRAESLRRLGLPEDTILLLFVGRVQRLKAPDVLLRAAARLLELNPSLRDRLVVAVVGGQSGTGYREPWLLSDLADSLGIADLVRLEPPCPRAELVHYYRAATVTVVPSHSESFGLVAVESQACGTPVVAARVGGLPTAVRDGVSGVLIDGHDPHDYANVLHRMITEPRWRERMGAAGIHHASGLSWESTVDGLLAAYRDALHQCRLTVPCR.

1D-myo-inositol 3-phosphate is bound at residue His-26. Residues 32-33 (QP) and Gly-40 each bind UDP-N-acetyl-alpha-D-glucosamine. 1D-myo-inositol 3-phosphate-binding positions include 37–42 (DAGGMN), Lys-95, Tyr-128, Thr-152, and Arg-172. UDP-N-acetyl-alpha-D-glucosamine is bound by residues Arg-246 and Lys-251. Mg(2+)-binding residues include Tyr-321, Arg-322, and Ala-324. 2 residues coordinate UDP-N-acetyl-alpha-D-glucosamine: Glu-334 and Glu-342. Thr-348 lines the Mg(2+) pocket.

The protein belongs to the glycosyltransferase group 1 family. MshA subfamily. Homodimer.

The enzyme catalyses 1D-myo-inositol 3-phosphate + UDP-N-acetyl-alpha-D-glucosamine = 1D-myo-inositol 2-acetamido-2-deoxy-alpha-D-glucopyranoside 3-phosphate + UDP + H(+). Catalyzes the transfer of a N-acetyl-glucosamine moiety to 1D-myo-inositol 3-phosphate to produce 1D-myo-inositol 2-acetamido-2-deoxy-glucopyranoside 3-phosphate in the mycothiol biosynthesis pathway. In Thermobifida fusca (strain YX), this protein is D-inositol 3-phosphate glycosyltransferase.